The chain runs to 330 residues: D-cysteine desulfhydrase (330 aa).

N6-(pyridoxal phosphate)lysine is present on Lys-52.

The protein belongs to the ACC deaminase/D-cysteine desulfhydrase family. In terms of assembly, homodimer. Pyridoxal 5'-phosphate serves as cofactor.

It carries out the reaction D-cysteine + H2O = hydrogen sulfide + pyruvate + NH4(+) + H(+). Its function is as follows. Catalyzes the alpha,beta-elimination reaction of D-cysteine and of several D-cysteine derivatives. It could be a defense mechanism against D-cysteine. The polypeptide is D-cysteine desulfhydrase (Yersinia pseudotuberculosis serotype O:1b (strain IP 31758)).